A 374-amino-acid polypeptide reads, in one-letter code: Speckle-type POZ protein (374 aa).

The region spanning 31–161 (KFSYMWTINN…DDKLTLFCEV (131 aa)) is the MATH domain. The interval 71 to 191 (VNPKGLDEES…PECRLADELG (121 aa)) is required for nuclear localization. The segment at 123–133 (YRFVQGKDWGF) is important for binding substrate proteins. Positions 173–297 (QNTMNMVKVP…MCEDALCSNL (125 aa)) constitute a BTB domain. 2 important for homodimerization regions span residues 186–217 (LADE…HKAI) and 297–355 (LSVE…AYRS).

Belongs to the Tdpoz family. Interacts with GLI2 and GLI3. Homodimer and homooligomer. Heterodimer with SPOPL. Each dimer interacts with two CUL3 molecules. Part of cullin-RING-based BCR (BTB-CUL3-RBX1) E3 ubiquitin-protein ligase complexes that contain CUL3 and homodimeric SPOP, or the heterodimer formed by SPOP and SPOPL, plus a target protein, such as MACROH2A1, PDX1/IPF1, BMI1, BRMS1 and DAXX. Interacts with IRF1; this interaction mediates IRF1 proteasomal degradation. Interacts with HNF1A.

Its subcellular location is the nucleus. It is found in the nucleus speckle. The protein operates within protein modification; protein ubiquitination. Component of a cullin-RING-based BCR (BTB-CUL3-RBX1) E3 ubiquitin-protein ligase complex that mediates the ubiquitination of target proteins, leading most often to their proteasomal degradation. In complex with CUL3, involved in ubiquitination and proteasomal degradation of BRMS1, DAXX, PDX1/IPF1, GLI2 and GLI3. In complex with CUL3, involved in ubiquitination of MACROH2A1 and BMI1; this does not lead to their proteasomal degradation. Inhibits transcriptional activation of PDX1/IPF1 targets, such as insulin, by promoting PDX1/IPF1 degradation. The cullin-RING-based BCR (BTB-CUL3-RBX1) E3 ubiquitin-protein ligase complex containing homodimeric SPOP has higher ubiquitin ligase activity than the complex that contains the heterodimer formed by SPOP and SPOPL. Involved in the regulation of bromodomain and extra-terminal motif (BET) proteins BRD2, BRD3, BRD4 stability.Plays an essential role for proper translation, but not for their degradation, of critical DNA replication licensing factors CDT1 and CDC6, thereby participating in DNA synthesis and cell proliferation. Regulates interferon regulatory factor 1/IRF1 proteasomal turnover by targeting S/T-rich degrons in IRF1. Involved in ubiquitination of BRDT and promotes its degradation, thereby regulates histone removal in early condensing spermatids prior to histone-to-protamine exchange. In Bos taurus (Bovine), this protein is Speckle-type POZ protein (SPOP).